A 606-amino-acid chain; its full sequence is Kelch-like protein 26 (606 aa).

Residues 1-19 (MAESGGSSGSSQSPERPSS) show a composition bias toward low complexity. Positions 1-20 (MAESGGSSGSSQSPERPSSL) are disordered. The residue at position 2 (Ala2) is an N-acetylalanine. The BTB domain occupies 54 to 121 (LDVVLTVNSE…AYSAEVTLDL (68 aa)). The 102-residue stretch at 156–257 (CLHIGQMATT…QPAELVDSVQ (102 aa)) folds into the BACK domain. Kelch repeat units follow at residues 301 to 352 (SLVA…VLDN), 353 to 404 (FVYV…ALGG), 406 to 451 (LYAT…AAAG), 452 to 499 (RLYI…GAAG), 501 to 550 (IYAL…LLER), and 552 to 599 (IYIV…AVLL). Ser430 bears the Phosphoserine mark.

May play a role in endo(sarco)plasmic reticulum (ER/SR) mitochondrial signaling. May be part of the ubiquitin-proteasome system (UPS) and affect ubiquitination and degradation of target substrates in cardiomyocytes. This Mus musculus (Mouse) protein is Kelch-like protein 26 (Klhl26).